The following is a 623-amino-acid chain: Kelch-like protein diablo (623 aa).

The tract at residues Met-1–His-54 is disordered. Thr-19 carries the post-translational modification Phosphothreonine. Gly residues predominate over residues Gly-20 to Ser-32. One can recognise a BTB domain in the interval Cys-72–Glu-139. Residues Cys-174–Gly-276 form the BACK domain. Kelch repeat units lie at residues Val-323–Asp-369, Leu-371–Gly-417, Phe-418–Gly-464, Leu-466–Asn-511, Ile-513–Gly-558, and Gln-559–Ala-605.

It functions in the pathway protein modification; protein ubiquitination. Probable substrate-specific adapter of an E3 ubiquitin-protein ligase complex which mediates the ubiquitination and subsequent proteasomal degradation of target proteins. May have a role in synapse differentiation and growth. This chain is Kelch-like protein diablo, found in Drosophila erecta (Fruit fly).